We begin with the raw amino-acid sequence, 127 residues long: Apolipoprotein C-IV (127 aa).

The N-terminal stretch at 1–27 (MSLLRNRLQDLPALCLCVLVLACIGAC) is a signal peptide.

This sequence belongs to the apolipoprotein C4 family.

The protein resides in the secreted. In terms of biological role, may participate in lipoprotein metabolism. The chain is Apolipoprotein C-IV (APOC4) from Chlorocebus sabaeus (Green monkey).